The following is a 368-amino-acid chain: 3-dehydroquinate synthase (368 aa).

This sequence belongs to the archaeal-type DHQ synthase family.

The enzyme catalyses 2-amino-2,3,7-trideoxy-D-lyxo-hept-6-ulosonate + NAD(+) + H2O = 3-dehydroquinate + NH4(+) + NADH + H(+). Its function is as follows. Catalyzes the oxidative deamination and cyclization of 2-amino-3,7-dideoxy-D-threo-hept-6-ulosonic acid (ADH) to yield 3-dehydroquinate (DHQ), which is fed into the canonical shikimic pathway of aromatic amino acid biosynthesis. The chain is 3-dehydroquinate synthase from Methanobrevibacter smithii (strain ATCC 35061 / DSM 861 / OCM 144 / PS).